A 116-amino-acid polypeptide reads, in one-letter code: Putative iron-sulfur cluster insertion protein ErpA (116 aa).

Iron-sulfur cluster contacts are provided by Cys-44, Cys-108, and Cys-110.

This sequence belongs to the HesB/IscA family. As to quaternary structure, homodimer. It depends on iron-sulfur cluster as a cofactor.

Functionally, required for insertion of 4Fe-4S clusters. In Janthinobacterium sp. (strain Marseille) (Minibacterium massiliensis), this protein is Putative iron-sulfur cluster insertion protein ErpA.